The primary structure comprises 313 residues: Protein PALE CRESS, chloroplastic (313 aa).

A chloroplast-targeting transit peptide spans 1–22 (MAATSLVLTCASPLFSSPRVIS).

In terms of tissue distribution, expressed in green tissues, including leaves. Accumulates in chloroplasts of mature stomatal guard cells.

The protein localises to the plastid. It is found in the chloroplast. Its subcellular location is the chromoplast. The protein resides in the etioplast. It localises to the amyloplast. Required for the differentiation of chloroplast from proplastids or etioplasts, probably by modulating some chloroplast-encoded genes expression and mRNA maturation. Involved in leaf-cells differentiation. This is Protein PALE CRESS, chloroplastic (PAC) from Arabidopsis thaliana (Mouse-ear cress).